We begin with the raw amino-acid sequence, 256 residues long: 5-oxoprolinase subunit A 3 (256 aa).

Belongs to the LamB/PxpA family. As to quaternary structure, forms a complex composed of PxpA, PxpB and PxpC.

It catalyses the reaction 5-oxo-L-proline + ATP + 2 H2O = L-glutamate + ADP + phosphate + H(+). Catalyzes the cleavage of 5-oxoproline to form L-glutamate coupled to the hydrolysis of ATP to ADP and inorganic phosphate. This chain is 5-oxoprolinase subunit A 3, found in Pseudomonas syringae pv. tomato (strain ATCC BAA-871 / DC3000).